We begin with the raw amino-acid sequence, 215 residues long: S-crystallin 4 (215 aa).

Residues 2 to 80 (PSYTLHYFNH…YLAREFGFHG (79 aa)) enclose the GST N-terminal domain. Residues 82–215 (NNMDMARVDY…YLQKRSRTEF (134 aa)) form the GST C-terminal domain.

It belongs to the GST superfamily. As to expression, lens.

Its function is as follows. S-crystallins are structural components of squids and octopi eye lens. Contains relatively little if any GST activity. In Enteroctopus dofleini (North Pacific giant octopus), this protein is S-crystallin 4.